The sequence spans 196 residues: Large ribosomal subunit protein uL5 (196 aa).

The protein belongs to the universal ribosomal protein uL5 family. In terms of assembly, part of the 50S ribosomal subunit; part of the 5S rRNA/L5/L18/L25 subcomplex. Contacts the 5S rRNA and the P site tRNA. Forms a bridge to the 30S subunit in the 70S ribosome.

Its function is as follows. This is one of the proteins that bind and probably mediate the attachment of the 5S RNA into the large ribosomal subunit, where it forms part of the central protuberance. In the 70S ribosome it contacts protein S13 of the 30S subunit (bridge B1b), connecting the 2 subunits; this bridge is implicated in subunit movement. Contacts the P site tRNA; the 5S rRNA and some of its associated proteins might help stabilize positioning of ribosome-bound tRNAs. The sequence is that of Large ribosomal subunit protein uL5 from Rhodopirellula baltica (strain DSM 10527 / NCIMB 13988 / SH1).